The primary structure comprises 132 residues: Profilin-1 (132 aa).

This sequence belongs to the profilin family. Occurs in many kinds of cells as a complex with monomeric actin in a 1:1 ratio. As to expression, expressed in the nerve ring during late embryonic stages. In adults, expression is seen in the neurons, vulva and somatic gonad.

The protein localises to the cytoplasm. The protein resides in the cytoskeleton. Functionally, binds to actin and affects the structure of the cytoskeleton. At high concentrations, profilin prevents the polymerization of actin, whereas it enhances it at low concentrations. By binding to PIP2, it inhibits the formation of IP3 and DG. Also binds to poly(L-proline) and phosphatidylinositol 4,5-bisphosphate micelles. This chain is Profilin-1 (pfn-1), found in Caenorhabditis elegans.